Consider the following 219-residue polypeptide: Peroxiredoxin (219 aa).

In terms of domain architecture, Thioredoxin spans 2–164 (PLIGDDAPSF…IKRIVVALQK (163 aa)). The active-site Cysteine sulfenic acid (-SOH) intermediate is the C44. A substrate-binding site is contributed by R127. C206 and C212 are joined by a disulfide.

Belongs to the peroxiredoxin family. Prx6 subfamily. As to quaternary structure, homodecamer. Pentamer of dimers that assemble into a ring structure.

The protein localises to the cytoplasm. It carries out the reaction a hydroperoxide + [thioredoxin]-dithiol = an alcohol + [thioredoxin]-disulfide + H2O. Thiol-specific peroxidase that catalyzes the reduction of hydrogen peroxide and organic hydroperoxides to water and alcohols, respectively. Plays a role in cell protection against oxidative stress by detoxifying peroxides. The sequence is that of Peroxiredoxin from Methanosarcina mazei (strain ATCC BAA-159 / DSM 3647 / Goe1 / Go1 / JCM 11833 / OCM 88) (Methanosarcina frisia).